The sequence spans 497 residues: UDP-N-acetylmuramoyl-L-alanyl-D-glutamate--2,6-diaminopimelate ligase (497 aa).

The UDP-N-acetyl-alpha-D-muramoyl-L-alanyl-D-glutamate site is built by leucine 27 and serine 29. Residue 116-122 (GTNGKTT) coordinates ATP. UDP-N-acetyl-alpha-D-muramoyl-L-alanyl-D-glutamate is bound by residues asparagine 157, 158 to 159 (TT), serine 185, glutamine 191, and arginine 193. The residue at position 225 (lysine 225) is an N6-carboxylysine. Meso-2,6-diaminopimelate contacts are provided by residues arginine 392, 416 to 419 (DNPR), glycine 467, and glutamate 471. The Meso-diaminopimelate recognition motif motif lies at 416-419 (DNPR).

Belongs to the MurCDEF family. MurE subfamily. It depends on Mg(2+) as a cofactor. In terms of processing, carboxylation is probably crucial for Mg(2+) binding and, consequently, for the gamma-phosphate positioning of ATP.

The protein localises to the cytoplasm. The catalysed reaction is UDP-N-acetyl-alpha-D-muramoyl-L-alanyl-D-glutamate + meso-2,6-diaminopimelate + ATP = UDP-N-acetyl-alpha-D-muramoyl-L-alanyl-gamma-D-glutamyl-meso-2,6-diaminopimelate + ADP + phosphate + H(+). Its pathway is cell wall biogenesis; peptidoglycan biosynthesis. In terms of biological role, catalyzes the addition of meso-diaminopimelic acid to the nucleotide precursor UDP-N-acetylmuramoyl-L-alanyl-D-glutamate (UMAG) in the biosynthesis of bacterial cell-wall peptidoglycan. The polypeptide is UDP-N-acetylmuramoyl-L-alanyl-D-glutamate--2,6-diaminopimelate ligase (Buchnera aphidicola subsp. Schizaphis graminum (strain Sg)).